The following is a 407-amino-acid chain: Peptidase T (407 aa).

Position 82 (H82) interacts with Zn(2+). D84 is a catalytic residue. D143 contributes to the Zn(2+) binding site. E177 functions as the Proton acceptor in the catalytic mechanism. The Zn(2+) site is built by E178, D200, and H382.

The protein belongs to the peptidase M20B family. Requires Zn(2+) as cofactor.

Its subcellular location is the cytoplasm. It catalyses the reaction Release of the N-terminal residue from a tripeptide.. Functionally, cleaves the N-terminal amino acid of tripeptides. This Streptococcus pyogenes serotype M49 (strain NZ131) protein is Peptidase T.